A 201-amino-acid polypeptide reads, in one-letter code: Recombination protein RecR (201 aa).

The segment at 57–72 (CRSCRTFTEEDECNIC) adopts a C4-type zinc-finger fold. The Toprim domain occupies 81-176 (GQLCVVEMPE…KVTRIAHGIP (96 aa)).

The protein belongs to the RecR family.

In terms of biological role, may play a role in DNA repair. It seems to be involved in an RecBC-independent recombinational process of DNA repair. It may act with RecF and RecO. In Actinobacillus pleuropneumoniae serotype 5b (strain L20), this protein is Recombination protein RecR.